Reading from the N-terminus, the 1985-residue chain is Histone-lysine N-methyltransferase SETD1B (1985 aa).

Residues 1-11 (MENSHPHHHHQ) show a composition bias toward basic residues. Positions 1 to 25 (MENSHPHHHHQQPPPQPGPSGERRN) are disordered. The interaction with WDR82 stretch occupies residues 67-97 (VEDPRVVGIWTKNKELELSVPKFKIDEFYVG). An RRM domain is found at 92–180 (DEFYVGPVPP…NIIHVELDTK (89 aa)). Disordered regions lie at residues 234 to 304 (GCGS…QDPT), 353 to 710 (GSSG…PPPA), 955 to 1480 (VKRK…RTGP), 1519 to 1624 (QLPP…STKL), and 1658 to 1687 (RGPW…PQPL). 4 stretches are compositionally biased toward polar residues: residues 242-258 (VTPN…TAYS), 264-273 (TPNSYGQGTP), 281-304 (PFSQ…QDPT), and 353-365 (GSSG…QSQD). Residues 366-381 (ATTFAHTPPPAQTATA) show a composition bias toward low complexity. Pro residues-rich tracts occupy residues 393-404 (TPAPPFPPPPEE), 423-433 (PAPPPLPPAEP), and 440-449 (GTPPGPPPPD). The segment covering 484–512 (EKPHDSLDSRIEMLLKEQRTKLPFLREQD) has biased composition (basic and acidic residues). Positions 522–535 (SPISSSSSQLSPLS) are enriched in low complexity. A compositionally biased stretch (pro residues) spans 583–594 (PRPPPEPGPPDP). Positions 628–637 (EDMEISDDEM) are enriched in acidic residues. Over residues 650–669 (PMVVTPGAGAVAAPNVLAPN) the composition is skewed to low complexity. The segment covering 670 to 710 (LPLPPPPGFPPLPPPPPPPPPQPGFPMPPPLPPPPPPPPPA) has biased composition (pro residues). Phosphoserine occurs at positions 977 and 985. Positions 986–1006 (ERERDRDIADAPCELTKRDPK) are enriched in basic and acidic residues. Serine 1022 is modified (phosphoserine). Low complexity predominate over residues 1032–1055 (LSASSSSSASSSSGSSTTSPSSSA). Over residues 1058–1083 (KEEEDRESTEEEEEEEEEEAEEEEEE) the composition is skewed to acidic residues. Residues 1087-1097 (SRISSPSSSSS) are compositionally biased toward low complexity. Acidic residues predominate over residues 1100 to 1120 (KDDEDDNEADSDGQIDSDIDD). Over residues 1143–1178 (SITTSKAPAESSSSSSESSGSSEFESSSESESSSSS) the composition is skewed to low complexity. The span at 1179–1202 (SEDEEEMTVPGVEEEEEEEEEEEK) shows a compositional bias: acidic residues. Over residues 1205-1217 (AMAAATVVAMAEE) the composition is skewed to low complexity. Residues 1247–1261 (GTEEEVDIEAEDEVP) show a composition bias toward acidic residues. Phosphoserine occurs at positions 1283, 1301, and 1354. A compositionally biased stretch (pro residues) spans 1331–1373 (EPPPMLSLPLQPPLPPPRLLRPPSPPPEPETPEPPKPPVPLEP). Positions 1402-1442 (PGGEPPLSGSSSGLSLSSPQVPGSPFSYPSPSPGLSSGGLP) are enriched in low complexity. The span at 1535–1544 (IKRKPGRPRR) shows a compositional bias: basic residues. Pro residues-rich tracts occupy residues 1600-1619 (PAPP…PPPV) and 1678-1687 (SPEPSPPQPL). Phosphoserine is present on residues serine 1678 and serine 1682. A WDR5 interaction motif (WIN) motif is present at residues 1764-1769 (GCARSE). The disordered stretch occupies residues 1786 to 1819 (SRASTDEPPMDTQGMSIPAQPHASTRAGSERRSE). A RxxxRR motif motif is present at residues 1817 to 1822 (RSEQRR). An SET domain is found at 1846–1963 (KKLKFCKSHI…VNEEITYDYK (118 aa)). Tyrosine 1962 contributes to the S-adenosyl-L-methionine binding site. A Post-SET domain is found at 1969 to 1985 (VKIPCLCGSENCRGTLN).

This sequence belongs to the class V-like SAM-binding methyltransferase superfamily. Component of the SET1B/COMPASS complex composed of the catalytic subunit SETD1B, WDR5, WDR82, RBBP5, ASH2L/ASH2, CXXC1/CFP1, HCFC1, DPY30 homotrimer and BOD1. Forms a core complex with the evolutionary conserved subcomplex WRAD composed of WDR5, RBBP5, ASH2L/ASH2 and DPY30 subunits; WRAD differentially stimulates the methyltransferase activity. Interacts with HCFC1 and ASH2L/ASH2. Interacts (via the RRM domain) with WDR82. Interacts (via the RRM domain) with hyperphosphorylated C-terminal domain (CTD) of RNA polymerase II large subunit (POLR2A) only in the presence of WDR82. Binds specifically to CTD heptad repeats phosphorylated on 'Ser-5' of each heptad. Interacts with RBM15. Interacts (via WIN motif) with WDR5. As to expression, widely expressed.

It is found in the nucleus. The protein localises to the nucleus speckle. The protein resides in the chromosome. Its subcellular location is the cytoplasm. It catalyses the reaction L-lysyl(4)-[histone H3] + S-adenosyl-L-methionine = N(6)-methyl-L-lysyl(4)-[histone H3] + S-adenosyl-L-homocysteine + H(+). The catalysed reaction is N(6)-methyl-L-lysyl(4)-[histone H3] + S-adenosyl-L-methionine = N(6),N(6)-dimethyl-L-lysyl(4)-[histone H3] + S-adenosyl-L-homocysteine + H(+). The enzyme catalyses N(6),N(6)-dimethyl-L-lysyl(4)-[histone H3] + S-adenosyl-L-methionine = N(6),N(6),N(6)-trimethyl-L-lysyl(4)-[histone H3] + S-adenosyl-L-homocysteine + H(+). In terms of biological role, histone methyltransferase that catalyzes methyl group transfer from S-adenosyl-L-methionine to the epsilon-amino group of 'Lys-4' of histone H3 (H3K4) via a non-processive mechanism. Part of chromatin remodeling machinery, forms H3K4me1, H3K4me2 and H3K4me3 methylation marks at active chromatin sites where transcription and DNA repair take place. Plays an essential role in regulating the transcriptional programming of multipotent hematopoietic progenitor cells and lymphoid lineage specification during hematopoiesis. The sequence is that of Histone-lysine N-methyltransferase SETD1B (Setd1b) from Mus musculus (Mouse).